A 242-amino-acid polypeptide reads, in one-letter code: NAD-dependent protein deacetylase (242 aa).

Positions 1-242 (MQQFEEVRTI…EFVEGLSSIK (242 aa)) constitute a Deacetylase sirtuin-type domain. NAD(+) contacts are provided by Ala23, Thr27, Phe34, Arg35, Gln102, Ile104, Asp105, and His120. Phe34 is a nicotinamide binding site. Nicotinamide is bound by residues Ile104 and Asp105. His120 acts as the Proton acceptor in catalysis. Positions 128, 131, 148, and 151 each coordinate Zn(2+). NAD(+) contacts are provided by Thr187, Ser188, Asn213, and Ile231.

This sequence belongs to the sirtuin family. Class U subfamily. Zn(2+) serves as cofactor.

Its subcellular location is the cytoplasm. The enzyme catalyses N(6)-acetyl-L-lysyl-[protein] + NAD(+) + H2O = 2''-O-acetyl-ADP-D-ribose + nicotinamide + L-lysyl-[protein]. NAD-dependent protein deacetylase which modulates the activities of several enzymes which are inactive in their acetylated form. This chain is NAD-dependent protein deacetylase, found in Bacillus anthracis.